Consider the following 205-residue polypeptide: Proteasome subunit beta type-3 (205 aa).

S2 bears the N-acetylserine mark. K77 is modified (N6-acetyllysine).

It belongs to the peptidase T1B family. The 26S proteasome consists of a 20S proteasome core and two 19S regulatory subunits. The 20S proteasome core is a barrel-shaped complex made of 28 subunits that are arranged in four stacked rings. The two outer rings are each formed by seven alpha subunits, and the two inner rings are formed by seven beta subunits. The proteolytic activity is exerted by three beta-subunits PSMB5, PSMB6 and PSMB7.

Its subcellular location is the cytoplasm. The protein localises to the nucleus. Its function is as follows. Non-catalytic component of the 20S core proteasome complex involved in the proteolytic degradation of most intracellular proteins. This complex plays numerous essential roles within the cell by associating with different regulatory particles. Associated with two 19S regulatory particles, forms the 26S proteasome and thus participates in the ATP-dependent degradation of ubiquitinated proteins. The 26S proteasome plays a key role in the maintenance of protein homeostasis by removing misfolded or damaged proteins that could impair cellular functions, and by removing proteins whose functions are no longer required. Associated with the PA200 or PA28, the 20S proteasome mediates ubiquitin-independent protein degradation. This type of proteolysis is required in several pathways including spermatogenesis (20S-PA200 complex) or generation of a subset of MHC class I-presented antigenic peptides (20S-PA28 complex). This is Proteasome subunit beta type-3 (Psmb3) from Rattus norvegicus (Rat).